Consider the following 253-residue polypeptide: uncharacterized protein (253 aa).

The N-terminal stretch at 1-16 is a signal peptide; it reads MCVVYRTSVLILLASG. C17 carries N-palmitoyl cysteine lipidation. C17 carries S-diacylglycerol cysteine lipidation.

Belongs to the staphylococcal tandem lipoprotein family.

The protein resides in the cell membrane. This is an uncharacterized protein from Staphylococcus aureus (strain N315).